A 201-amino-acid polypeptide reads, in one-letter code: Glycerol-3-phosphate acyltransferase (201 aa).

5 helical membrane-spanning segments follow: residues 10–30, 60–80, 86–106, 116–136, and 166–186; these read MLIG…GLIL, LAAA…LIAA, AAIA…WIGF, LGVL…AWIV, and ALAA…RANI.

It belongs to the PlsY family. In terms of assembly, probably interacts with PlsX.

The protein resides in the cell inner membrane. It carries out the reaction an acyl phosphate + sn-glycerol 3-phosphate = a 1-acyl-sn-glycero-3-phosphate + phosphate. Its pathway is lipid metabolism; phospholipid metabolism. In terms of biological role, catalyzes the transfer of an acyl group from acyl-phosphate (acyl-PO(4)) to glycerol-3-phosphate (G3P) to form lysophosphatidic acid (LPA). This enzyme utilizes acyl-phosphate as fatty acyl donor, but not acyl-CoA or acyl-ACP. This Brucella abortus (strain 2308) protein is Glycerol-3-phosphate acyltransferase.